The following is a 273-amino-acid chain: Large ribosomal subunit protein uL2 (273 aa).

The interval 221 to 263 (RGTAMNPVDHPHGGGEGRNFGKHPVTPWGVQTKGKKTRHNKRT) is disordered. Residues 253–263 (KGKKTRHNKRT) are compositionally biased toward basic residues.

This sequence belongs to the universal ribosomal protein uL2 family. Part of the 50S ribosomal subunit. Forms a bridge to the 30S subunit in the 70S ribosome.

In terms of biological role, one of the primary rRNA binding proteins. Required for association of the 30S and 50S subunits to form the 70S ribosome, for tRNA binding and peptide bond formation. It has been suggested to have peptidyltransferase activity; this is somewhat controversial. Makes several contacts with the 16S rRNA in the 70S ribosome. In Histophilus somni (strain 2336) (Haemophilus somnus), this protein is Large ribosomal subunit protein uL2.